The primary structure comprises 182 residues: Isopentenyl-diphosphate Delta-isomerase (182 aa).

Mn(2+) contacts are provided by histidine 25 and histidine 32. In terms of domain architecture, Nudix hydrolase spans 30–164 (RLHLAFSSWL…PWAFSPWMVM (135 aa)). Residue cysteine 67 is part of the active site. Cysteine 67 provides a ligand contact to Mg(2+). Histidine 69 contacts Mn(2+). Glutamate 87 contributes to the Mg(2+) binding site. The Mn(2+) site is built by glutamate 114 and glutamate 116. Residue glutamate 116 is part of the active site.

This sequence belongs to the IPP isomerase type 1 family. In terms of assembly, homodimer. Mg(2+) serves as cofactor. It depends on Mn(2+) as a cofactor.

Its subcellular location is the cytoplasm. The catalysed reaction is isopentenyl diphosphate = dimethylallyl diphosphate. The protein operates within isoprenoid biosynthesis; dimethylallyl diphosphate biosynthesis; dimethylallyl diphosphate from isopentenyl diphosphate: step 1/1. Functionally, catalyzes the 1,3-allylic rearrangement of the homoallylic substrate isopentenyl (IPP) to its highly electrophilic allylic isomer, dimethylallyl diphosphate (DMAPP). This is Isopentenyl-diphosphate Delta-isomerase from Shigella dysenteriae serotype 1 (strain Sd197).